The primary structure comprises 222 residues: Imidazoleglycerol-phosphate dehydratase (222 aa).

This sequence belongs to the imidazoleglycerol-phosphate dehydratase family.

It carries out the reaction D-erythro-1-(imidazol-4-yl)glycerol 3-phosphate = 3-(imidazol-4-yl)-2-oxopropyl phosphate + H2O. It functions in the pathway amino-acid biosynthesis; L-histidine biosynthesis; L-histidine from 5-phospho-alpha-D-ribose 1-diphosphate: step 6/9. This Scheffersomyces stipitis (strain ATCC 58785 / CBS 6054 / NBRC 10063 / NRRL Y-11545) (Yeast) protein is Imidazoleglycerol-phosphate dehydratase (HIS3).